A 297-amino-acid chain; its full sequence is Cyclin-dependent kinase 1 (297 aa).

An N-acetylmethionine modification is found at Met-1. A Phosphotyrosine; by PKR modification is found at Tyr-4. One can recognise a Protein kinase domain in the interval 4–287 (YTKIEKIGEG…GKMALNHPYF (284 aa)). N6-acetyllysine; alternate occurs at positions 6 and 9. Glycyl lysine isopeptide (Lys-Gly) (interchain with G-Cter in SUMO2); alternate cross-links involve residues Lys-6 and Lys-9. 10–18 (IGEGTYGVV) provides a ligand contact to ATP. Thr-14 is subject to Phosphothreonine; by PKMYT1. Residue Tyr-15 is modified to Phosphotyrosine; by PKMYT1, WEE1 and WEE2. Tyr-15 is subject to Phosphotyrosine; by WEE1 and WEE2. Position 19 is a phosphotyrosine (Tyr-19). Lys-20 is covalently cross-linked (Glycyl lysine isopeptide (Lys-Gly) (interchain with G-Cter in SUMO2)). ATP is bound at residue Lys-33. At Ser-39 the chain carries Phosphoserine. Tyr-77 bears the Phosphotyrosine mark. The active-site Proton acceptor is the Asp-128. Lys-139 participates in a covalent cross-link: Glycyl lysine isopeptide (Lys-Gly) (interchain with G-Cter in SUMO2). At Thr-141 the chain carries Phosphothreonine. Thr-161 is subject to Phosphothreonine; by CAK. Ser-178 is modified (phosphoserine). Position 222 is a phosphothreonine (Thr-222). Lys-245 bears the N6-succinyllysine mark. Ser-248 is subject to Phosphoserine.

Belongs to the protein kinase superfamily. CMGC Ser/Thr protein kinase family. CDC2/CDKX subfamily. As to quaternary structure, forms a stable but non-covalent complex with a regulatory subunit and with a cyclin. Interacts with cyclins-B (CCNB1, CCNB2 and CCNB3) to form a serine/threonine kinase holoenzyme complex also known as maturation promoting factor (MPF). The cyclin subunit imparts substrate specificity to the complex. Can also form CDK1-cylin-D and CDK1-cyclin-E complexes that phosphorylate RB1 in vitro. Binds to RB1 and other transcription factors such as FOXO1 and RUNX2. Promotes G2-M transition when in complex with a cyclin-B. Interacts with DLGAP5. Binds to the CDK inhibitors CDKN1A/p21 and CDKN1B/p27. Isoform 2 is unable to complex with cyclin-B1 and also fails to bind to CDKN1A/p21. Interacts with catalytically active CCNB1 and RALBP1 during mitosis to form an endocytotic complex during interphase. Associates with cyclins-A and B1 during S-phase in regenerating hepatocytes. Interacts with FANCC. Interacts with CEP63; this interaction recruits CDK1 to centrosomes. Interacts with CENPA. Interacts with NR1D1. In terms of processing, phosphorylation at Thr-161 by CAK/CDK7 activates kinase activity. Phosphorylation at Thr-14 and Tyr-15 by PKMYT1 prevents nuclear translocation. Phosphorylation at Tyr-15 by WEE1 and WEE2 inhibits the protein kinase activity and acts as a negative regulator of entry into mitosis (G2 to M transition). Phosphorylation by PKMYT1 and WEE1 takes place during mitosis to keep CDK1-cyclin-B complexes inactive until the end of G2. By the end of G2, PKMYT1 and WEE1 are inactivated, but CDC25A and CDC25B are activated. Dephosphorylation by active CDC25A and CDC25B at Thr-14 and Tyr-15, leads to CDK1 activation at the G2-M transition. Phosphorylation at Tyr-15 by WEE2 during oogenesis is required to maintain meiotic arrest in oocytes during the germinal vesicle (GV) stage, a long period of quiescence at dictyate prophase I, leading to prevent meiotic reentry. Phosphorylation by WEE2 is also required for metaphase II exit during egg activation to ensure exit from meiosis in oocytes and promote pronuclear formation. Phosphorylated at Tyr-4 by PKR/EIF2AK2 upon genotoxic stress. This phosphorylation triggers CDK1 polyubiquitination and subsequent proteolysis, thus leading to G2 arrest. Polyubiquitinated upon genotoxic stress.

Its subcellular location is the nucleus. It is found in the cytoplasm. The protein localises to the mitochondrion. The protein resides in the cytoskeleton. It localises to the microtubule organizing center. Its subcellular location is the centrosome. It is found in the spindle. It carries out the reaction L-seryl-[protein] + ATP = O-phospho-L-seryl-[protein] + ADP + H(+). It catalyses the reaction L-threonyl-[protein] + ATP = O-phospho-L-threonyl-[protein] + ADP + H(+). The catalysed reaction is [DNA-directed RNA polymerase] + ATP = phospho-[DNA-directed RNA polymerase] + ADP + H(+). Phosphorylation at Thr-14 or Tyr-15 inactivates the enzyme, while phosphorylation at Thr-161 activates it. Activated through a multistep process; binding to cyclin-B is required for relocation of cyclin-kinase complexes to the nucleus, activated by CAK/CDK7-mediated phosphorylation on Thr-161, and CDC25-mediated dephosphorylation of inhibitory phosphorylation on Thr-14 and Tyr-15. Activity is restricted during S-phase in an ATR-dependent manner to prevent premature entry into G2. Repressed by the CDK inhibitors CDKN1A/p21 and CDKN1B/p27 during the G1 phase and by CDKN1A/p21 at the G1-S checkpoint upon DNA damage. Transient activation by rapid and transient dephosphorylation at Tyr-15 triggered by TGFB1. Its function is as follows. Plays a key role in the control of the eukaryotic cell cycle by modulating the centrosome cycle as well as mitotic onset; promotes G2-M transition via association with multiple interphase cyclins. Phosphorylates PARVA/actopaxin, APC, AMPH, APC, BARD1, Bcl-xL/BCL2L1, BRCA2, CALD1, CASP8, CDC7, CDC20, CDC25A, CDC25C, CC2D1A, CENPA, CSNK2 proteins/CKII, FZR1/CDH1, CDK7, CEBPB, CHAMP1, DMD/dystrophin, EEF1 proteins/EF-1, EZH2, KIF11/EG5, EGFR, FANCG, FOS, GFAP, GOLGA2/GM130, GRASP1, UBE2A/hHR6A, HIST1H1 proteins/histone H1, HMGA1, HIVEP3/KRC, KAT5, LMNA, LMNB, LBR, LATS1, MAP1B, MAP4, MARCKS, MCM2, MCM4, MKLP1, MLST8, MYB, NEFH, NFIC, NPC/nuclear pore complex, PITPNM1/NIR2, NPM1, NCL, NUCKS1, NPM1/numatrin, ORC1, PRKAR2A, EEF1E1/p18, EIF3F/p47, p53/TP53, NONO/p54NRB, PAPOLA, PLEC/plectin, RB1, TPPP, UL40/R2, RAB4A, RAP1GAP, RBBP8/CtIP, RCC1, RPS6KB1/S6K1, KHDRBS1/SAM68, ESPL1, SKI, BIRC5/survivin, STIP1, TEX14, beta-tubulins, MAPT/TAU, NEDD1, VIM/vimentin, TK1, FOXO1, RUNX1/AML1, SAMHD1, SIRT2, CGAS and RUNX2. CDK1/CDC2-cyclin-B controls pronuclear union in interphase fertilized eggs. Essential for early stages of embryonic development. During G2 and early mitosis, CDC25A/B/C-mediated dephosphorylation activates CDK1/cyclin complexes which phosphorylate several substrates that trigger at least centrosome separation, Golgi dynamics, nuclear envelope breakdown and chromosome condensation. Once chromosomes are condensed and aligned at the metaphase plate, CDK1 activity is switched off by WEE1- and PKMYT1-mediated phosphorylation to allow sister chromatid separation, chromosome decondensation, reformation of the nuclear envelope and cytokinesis. Phosphorylates KRT5 during prometaphase and metaphase. Inactivated by PKR/EIF2AK2- and WEE1-mediated phosphorylation upon DNA damage to stop cell cycle and genome replication at the G2 checkpoint thus facilitating DNA repair. Reactivated after successful DNA repair through WIP1-dependent signaling leading to CDC25A/B/C-mediated dephosphorylation and restoring cell cycle progression. Catalyzes lamin (LMNA, LMNB1 and LMNB2) phosphorylation at the onset of mitosis, promoting nuclear envelope breakdown. In proliferating cells, CDK1-mediated FOXO1 phosphorylation at the G2-M phase represses FOXO1 interaction with 14-3-3 proteins and thereby promotes FOXO1 nuclear accumulation and transcription factor activity, leading to cell death of postmitotic neurons. The phosphorylation of beta-tubulins regulates microtubule dynamics during mitosis. NEDD1 phosphorylation promotes PLK1-mediated NEDD1 phosphorylation and subsequent targeting of the gamma-tubulin ring complex (gTuRC) to the centrosome, an important step for spindle formation. In addition, CC2D1A phosphorylation regulates CC2D1A spindle pole localization and association with SCC1/RAD21 and centriole cohesion during mitosis. The phosphorylation of Bcl-xL/BCL2L1 after prolongated G2 arrest upon DNA damage triggers apoptosis. In contrast, CASP8 phosphorylation during mitosis prevents its activation by proteolysis and subsequent apoptosis. This phosphorylation occurs in cancer cell lines, as well as in primary breast tissues and lymphocytes. EZH2 phosphorylation promotes H3K27me3 maintenance and epigenetic gene silencing. CALD1 phosphorylation promotes Schwann cell migration during peripheral nerve regeneration. CDK1-cyclin-B complex phosphorylates NCKAP5L and mediates its dissociation from centrosomes during mitosis. Regulates the amplitude of the cyclic expression of the core clock gene BMAL1 by phosphorylating its transcriptional repressor NR1D1, and this phosphorylation is necessary for SCF(FBXW7)-mediated ubiquitination and proteasomal degradation of NR1D1. Phosphorylates EML3 at 'Thr-881' which is essential for its interaction with HAUS augmin-like complex and TUBG1. Phosphorylates CGAS during mitosis, leading to its inhibition, thereby preventing CGAS activation by self DNA during mitosis. Phosphorylates SKA3 during mitosis which promotes SKA3 binding to the NDC80 complex and anchoring of the SKA complex to kinetochores, to enable stable attachment of mitotic spindle microtubules to kinetochores. The chain is Cyclin-dependent kinase 1 (CDK1) from Bos taurus (Bovine).